Consider the following 1189-residue polypeptide: Increased DNA methylation 1 (1189 aa).

2 disordered regions span residues 475-498 (KNLH…HDSL) and 523-597 (SRDE…CRLL). A compositionally biased stretch (basic and acidic residues) spans 523-532 (SRDERLRNEK). 2 stretches are compositionally biased toward basic residues: residues 541 to 550 (KKGRKKARKH) and 565 to 590 (NKGK…KRNN). A PHD-type 1 zinc finger spans residues 726-771 (DDSCGVCGDGGELICCDNCPSTFHQACLSMQVLPEGSWYCSSCTCW). The segment at 767–823 (SCTCWICSELVSDNAERSQDFKCSQCAHKYHGTCLQGISKRRKLFPETYFCGKNCEK) adopts a PHD-type 2; degenerate zinc-finger fold. Positions 879–1024 (MEESFLSMVD…GTTLLKKTLY (146 aa)) constitute an N-acetyltransferase domain. The segment at 1031–1157 (TMKGVCLSKE…SSSSAALEEV (127 aa)) is disordered. 3 stretches are compositionally biased toward basic and acidic residues: residues 1038–1050 (SKER…KEAD), 1102–1114 (NPSR…DRPN), and 1129–1145 (CLQK…KETT). The segment covering 1147–1157 (ASSSSAALEEV) has biased composition (low complexity).

As to quaternary structure, interacts (via N-terminus) with IDM2. Interacts with IMD3. Part of a complex made of MBD7, IDM1, IDM2 and IDM3. In terms of tissue distribution, expressed in cotyledons and hypocotyls in young seedlings.

The protein localises to the nucleus. Histone H3 acetyltransferase that binds methylated DNA at chromatin sites lacking histone H3K4 di- or trimethylation and catalyzes H3K18 and H3K23 acetylation. Prevents the transcriptional silencing of transgenes and of some endogenous genes. Requires the presence of IDM2 for efficient H3K18 acetylation, but not for H3K23 acetylation. The chain is Increased DNA methylation 1 from Arabidopsis thaliana (Mouse-ear cress).